The sequence spans 491 residues: 2,3-bisphosphoglycerate-independent phosphoglycerate mutase (491 aa).

Mn(2+)-binding residues include aspartate 11 and serine 61. Serine 61 functions as the Phosphoserine intermediate in the catalytic mechanism. Substrate contacts are provided by residues histidine 118, 147 to 148 (RD), arginine 177, arginine 183, 247 to 250 (RNDR), and lysine 320. Mn(2+) contacts are provided by aspartate 386, histidine 390, aspartate 427, histidine 428, and histidine 445.

Belongs to the BPG-independent phosphoglycerate mutase family. In terms of assembly, monomer. Mn(2+) is required as a cofactor.

It carries out the reaction (2R)-2-phosphoglycerate = (2R)-3-phosphoglycerate. It functions in the pathway carbohydrate degradation; glycolysis; pyruvate from D-glyceraldehyde 3-phosphate: step 3/5. Functionally, catalyzes the interconversion of 2-phosphoglycerate and 3-phosphoglycerate. This Helicobacter pylori (strain J99 / ATCC 700824) (Campylobacter pylori J99) protein is 2,3-bisphosphoglycerate-independent phosphoglycerate mutase.